We begin with the raw amino-acid sequence, 507 residues long: ATP synthase subunit alpha, chloroplastic (507 aa).

Residue 170–177 (GDRQTGKT) coordinates ATP.

Belongs to the ATPase alpha/beta chains family. F-type ATPases have 2 components, CF(1) - the catalytic core - and CF(0) - the membrane proton channel. CF(1) has five subunits: alpha(3), beta(3), gamma(1), delta(1), epsilon(1). CF(0) has four main subunits: a, b, b' and c.

It localises to the plastid. The protein localises to the chloroplast thylakoid membrane. It catalyses the reaction ATP + H2O + 4 H(+)(in) = ADP + phosphate + 5 H(+)(out). Functionally, produces ATP from ADP in the presence of a proton gradient across the membrane. The alpha chain is a regulatory subunit. This is ATP synthase subunit alpha, chloroplastic from Ipomoea purpurea (Common morning glory).